The following is a 627-amino-acid chain: UvrABC system protein C (627 aa).

The region spanning 26–105 (PSPGVYQFRN…IKELKPRYNV (80 aa)) is the GIY-YIG domain. A UVR domain is found at 219–254 (STMIRSLTSAMQLFARELKFERAAEIKMQLESLKRY).

Belongs to the UvrC family. Interacts with UvrB in an incision complex.

It localises to the cytoplasm. In terms of biological role, the UvrABC repair system catalyzes the recognition and processing of DNA lesions. UvrC both incises the 5' and 3' sides of the lesion. The N-terminal half is responsible for the 3' incision and the C-terminal half is responsible for the 5' incision. This chain is UvrABC system protein C, found in Pelodictyon phaeoclathratiforme (strain DSM 5477 / BU-1).